Consider the following 185-residue polypeptide: Large ribosomal subunit protein uL5 (185 aa).

It belongs to the universal ribosomal protein uL5 family. As to quaternary structure, part of the 50S ribosomal subunit; part of the 5S rRNA/L5/L18/L25 subcomplex. Contacts the 5S rRNA and the P site tRNA. Forms a bridge to the 30S subunit in the 70S ribosome.

In terms of biological role, this is one of the proteins that bind and probably mediate the attachment of the 5S RNA into the large ribosomal subunit, where it forms part of the central protuberance. In the 70S ribosome it contacts protein S13 of the 30S subunit (bridge B1b), connecting the 2 subunits; this bridge is implicated in subunit movement. Contacts the P site tRNA; the 5S rRNA and some of its associated proteins might help stabilize positioning of ribosome-bound tRNAs. This chain is Large ribosomal subunit protein uL5, found in Rhodopseudomonas palustris (strain BisB18).